We begin with the raw amino-acid sequence, 520 residues long: Glucose-1-phosphate adenylyltransferase small subunit, chloroplastic (520 aa).

The N-terminal 71 residues, 1–71 (MASVSAIGVL…RNPIIVSPKA (71 aa)), are a transit peptide targeting the chloroplast.

The protein belongs to the bacterial/plant glucose-1-phosphate adenylyltransferase family. Heterotetramer. As to expression, leaves.

Its subcellular location is the plastid. The protein resides in the chloroplast. The enzyme catalyses alpha-D-glucose 1-phosphate + ATP + H(+) = ADP-alpha-D-glucose + diphosphate. It functions in the pathway glycan biosynthesis; starch biosynthesis. Activated by 3'phosphoglycerate, inhibited by orthophosphate. Allosteric regulation. Its function is as follows. This protein plays a role in synthesis of starch. It catalyzes the synthesis of the activated glycosyl donor, ADP-glucose from Glc-1-P and ATP. The protein is Glucose-1-phosphate adenylyltransferase small subunit, chloroplastic (APS1) of Arabidopsis thaliana (Mouse-ear cress).